The chain runs to 1158 residues: Teashirt homolog 1 (1158 aa).

3 disordered regions span residues 70 to 126, 170 to 228, and 310 to 341; these read DDGR…DMDT, INST…ANNG, and TGHY…EMEG. A compositionally biased stretch (polar residues) spans 76–88; sequence LSYQNSPLSNGTN. 2 stretches are compositionally biased toward low complexity: residues 186 to 205 and 213 to 228; these read SHAS…ASAS and SSNS…ANNG. C2H2-type zinc fingers lie at residues 288 to 312 and 349 to 373; these read FRCK…ETGH and LKCM…KTKH. A compositionally biased stretch (basic and acidic residues) spans 310–326; the sequence is TGHYRDDNKDKEEDRGK. A disordered region spans residues 405-425; sequence PCSPDSISSTPGIPLAETAPT. Residues 461-485 form a C2H2-type 3 zinc finger; the sequence is LKCMECGSSHDTLQQLTAHMMVTGH. 3 disordered regions span residues 516–573, 656–681, and 693–748; these read PPTT…VEKS, LKSL…NHKS, and VTGK…VDKD. The span at 555–573 shows a compositional bias: basic and acidic residues; it reads EEKKIKQEKEDPSERVEKS. Positions 656–671 are enriched in low complexity; it reads LKSLTSDSSTLIHSPS. 2 stretches are compositionally biased toward basic and acidic residues: residues 693–716 and 724–748; these read VTGK…KHLT and LKER…VDKD. The segment at residues 963–1033 is a DNA-binding region (homeobox); that stretch reads RKGRQSNWNP…NVKYQLRRTG (71 aa). C2H2-type zinc fingers lie at residues 1048–1070 and 1115–1138; these read FLCS…LESH and FQCK…SKTH.

Belongs to the teashirt C2H2-type zinc-finger protein family.

The protein resides in the nucleus. Its function is as follows. Probable transcriptional regulator involved in developmental processes. May act as a transcriptional repressor (Potential). The protein is Teashirt homolog 1 (tshz1) of Danio rerio (Zebrafish).